Consider the following 361-residue polypeptide: Serpentine receptor class epsilon-32 (361 aa).

7 consecutive transmembrane segments (helical) span residues 34–54 (IIEL…LYVM), 66–86 (ILYI…LITI), 124–144 (LLIF…YGIL), 168–188 (IPIA…LSVL), 195–215 (FLSH…YLFI), 256–276 (LVFV…ALAF), and 286–306 (FVEN…MLTI).

It belongs to the nematode receptor-like protein sre family.

Its subcellular location is the membrane. The chain is Serpentine receptor class epsilon-32 (sre-32) from Caenorhabditis elegans.